The sequence spans 174 residues: RNA pyrophosphohydrolase (174 aa).

Residues 6 to 149 (GFRANVGIII…KRDVYRKVMK (144 aa)) enclose the Nudix hydrolase domain. The Nudix box signature appears at 38-59 (GGVDDGETAEEAMYRELYEEVG).

This sequence belongs to the Nudix hydrolase family. RppH subfamily. A divalent metal cation is required as a cofactor.

Functionally, accelerates the degradation of transcripts by removing pyrophosphate from the 5'-end of triphosphorylated RNA, leading to a more labile monophosphorylated state that can stimulate subsequent ribonuclease cleavage. The sequence is that of RNA pyrophosphohydrolase from Shewanella baltica (strain OS223).